A 435-amino-acid chain; its full sequence is MIWKRSAVLRFYSVCGLLLQGSQGQFPLTQNVTVVEGGTAILTCRVDQNDNTSLQWSNPAQQTLYFDDKKALRDNRIELVRASWHELSISVSDVSLSDEGQYTCSLFTMPVKTSKAYLTVLGVPEKPQISGFSSPVMEGDLMQLTCKTSGSKPAADIRWFKNDKEIKDVKYLKEEDANRKTFTVSSTLDFRVDRSDDGVAVICRVDHESLNATPQVAMQVLEIHYTPSVKIIPSTPFPQEGQPLILTCESKGKPLPEPVLWTKDGGELPDPDRMVVSGRELNILFLNKTDNGTYRCEATNTIGQSSAEYVLIVHDVPNTLLPTTIIPSLTTATVTTTVAITTSPTTSATTSSIRDPNALAGQNGPDHALIGGIVAVVVFVTLCSIFLLGRYLARHKGTYLTNEAKGAEDAPDADTAIINAEGSQVNAEEKKEYFI.

The N-terminal stretch at 1–24 is a signal peptide; sequence MIWKRSAVLRFYSVCGLLLQGSQG. Over 25–367 the chain is Extracellular; that stretch reads QFPLTQNVTV…ALAGQNGPDH (343 aa). Residues 27–119 form the Ig-like V-type domain; it reads PLTQNVTVVE…PVKTSKAYLT (93 aa). N-linked (GlcNAc...) asparagine glycans are attached at residues N31 and N51. 3 disulfide bridges follow: C44-C104, C146-C203, and C248-C296. Ig-like C2-type domains are found at residues 127–219 and 227–312; these read PQIS…VAMQ and PSVK…YVLI. N-linked (GlcNAc...) asparagine glycosylation is present at N291. Residues 368 to 388 traverse the membrane as a helical segment; sequence ALIGGIVAVVVFVTLCSIFLL. Over 389 to 435 the chain is Cytoplasmic; that stretch reads GRYLARHKGTYLTNEAKGAEDAPDADTAIINAEGSQVNAEEKKEYFI. S423 carries the phosphoserine modification.

Belongs to the nectin family.

The protein resides in the cell membrane. It is found in the synapse. The protein localises to the cell projection. Its subcellular location is the axon. Adhesion molecule that engages in homo- and heterophilic interactions with the other nectin-like family members, leading to cell aggregation. Important for synapse organization, providing regulated trans-synaptic adhesion. Preferentially binds to oligodendrocytes. Functionally, (Microbial infection) Induces cell fusion in neuron infected by a neuropathogenic strain of measles. Interacts with measles hemagglutinin to trigger hyperfusogenic F-mediated membrane fusion and presumably transsynaptic cell-to-cell transmission of the virus. This chain is Cell adhesion molecule 2 (CADM2), found in Homo sapiens (Human).